A 463-amino-acid chain; its full sequence is Type IV secretion system protein PtlD homolog (463 aa).

Positions methionine 1 to alanine 24 are cleaved as a signal peptide. 5 consecutive transmembrane segments (helical) span residues leucine 118 to leucine 138, tryptophan 232 to serine 252, leucine 253 to valine 273, alanine 294 to glycine 314, and methionine 333 to alanine 353. Positions alanine 376–proline 410 are enriched in low complexity. The tract at residues alanine 376–proline 463 is disordered. The span at alanine 411 to serine 420 shows a compositional bias: pro residues. Residues valine 441 to valine 455 show a composition bias toward basic and acidic residues.

The protein resides in the cell membrane. This Bordetella parapertussis (strain 12822 / ATCC BAA-587 / NCTC 13253) protein is Type IV secretion system protein PtlD homolog (ptlD).